We begin with the raw amino-acid sequence, 433 residues long: Glucose-6-phosphate isomerase (433 aa).

Glu-285 (proton donor) is an active-site residue. Active-site residues include His-306 and Lys-421.

Belongs to the GPI family.

The protein localises to the cytoplasm. The catalysed reaction is alpha-D-glucose 6-phosphate = beta-D-fructose 6-phosphate. The protein operates within carbohydrate biosynthesis; gluconeogenesis. It functions in the pathway carbohydrate degradation; glycolysis; D-glyceraldehyde 3-phosphate and glycerone phosphate from D-glucose: step 2/4. In terms of biological role, catalyzes the reversible isomerization of glucose-6-phosphate to fructose-6-phosphate. The polypeptide is Glucose-6-phosphate isomerase (Mycoplasma mobile (strain ATCC 43663 / 163K / NCTC 11711) (Mesomycoplasma mobile)).